We begin with the raw amino-acid sequence, 422 residues long: 3-phosphoshikimate 1-carboxyvinyltransferase (422 aa).

The 3-phosphoshikimate site is built by lysine 20, serine 21, and arginine 25. Lysine 20 contacts phosphoenolpyruvate. Residues glycine 91 and arginine 119 each coordinate phosphoenolpyruvate. 3-phosphoshikimate-binding residues include threonine 163, serine 164, glutamine 165, aspartate 305, glutamine 328, and lysine 332. Phosphoenolpyruvate is bound at residue glutamine 165. Aspartate 305 (proton acceptor) is an active-site residue. The phosphoenolpyruvate site is built by arginine 336 and arginine 377.

This sequence belongs to the EPSP synthase family. As to quaternary structure, monomer.

Its subcellular location is the cytoplasm. The enzyme catalyses 3-phosphoshikimate + phosphoenolpyruvate = 5-O-(1-carboxyvinyl)-3-phosphoshikimate + phosphate. It functions in the pathway metabolic intermediate biosynthesis; chorismate biosynthesis; chorismate from D-erythrose 4-phosphate and phosphoenolpyruvate: step 6/7. In terms of biological role, catalyzes the transfer of the enolpyruvyl moiety of phosphoenolpyruvate (PEP) to the 5-hydroxyl of shikimate-3-phosphate (S3P) to produce enolpyruvyl shikimate-3-phosphate and inorganic phosphate. The protein is 3-phosphoshikimate 1-carboxyvinyltransferase of Ruminiclostridium cellulolyticum (strain ATCC 35319 / DSM 5812 / JCM 6584 / H10) (Clostridium cellulolyticum).